A 937-amino-acid chain; its full sequence is MPALTLTRLLRIGEGRTVKRLAHLADEVLALGSDYEQLTDAELRAKTDEFKQRYADGETLDDLLLEAFAVAREASWRVLNQKHYKVQVMGGAALHLGNIAEMKTGEGKTLTCVLPAYLNALSGDGVHVVTVNDYLAKRDAEWMGRVHRFLGLEVGVILGGMTPPQRRVAYAADITYGTNNEFGFDYLRDNMAHSLDDLVQRGHNFAVVDEVDSILIDEARTPLIISGPADASSKWYAEFARIAPLLKKDVHYEVDIKKRTIGVHEAGVEFVEDQLGIDNLYEAANSPLVSYLNNAIKAKELYQRDKDYIVRDGEVIIVDEFTGRILVGRRYNEGMHQAIEAKEGVEIQPENQTLATITLQNYFRLYDKLSGMTGTAETEAAELHQIYNLGVVPIPTNKPMIRVDQSDLIYKTEEAKFNAVVDDVAERHEKGQPVLIGTTSVERSEYLSKQFTRRGIPHSVLNAKFHEQEAQIIAEAGRPGAVTVATNMAGRGTDIVLGGNPDIIADILLRKQGLDPVETPEEYEAAWLPTLEQVKAQTAADADAVREAGGLYVLGTERHESRRIDNQLRGRSGRQGDPGESRFYLSLGDELMRRFNGAALEAIMTRLNLPDDVPIEAKMVSKAIKSAQTQVEQQNFEIRKNVLKYDEVMNQQRTVIYGERNRILRGEDMEGQVQNMITDVITAYVDGATAEGYVEDWDLEKLWTALKTLYPVSLDYRELTGELDGEPRDLSREELREALLEDAHSAYAKREQEIDGLAGEGSMRNLERQVLLSVLDRKWREHLYEMDYLKEGIGLRAMAQRDPLVEYQREGFDMFTAMLDGLKEESVGFLFNLQVEVQQPQPTGVSVDPGLRSPVGATVPAPAPAAPTPLLAKGITDQAPRGLNYIGPDEGGRASVHSDAEEYGGGTPAAAGTRRERREAARAEGKGKRGPKSRRKH.

ATP is bound by residues Q87, 105-109, and D494; that span reads GEGKT. The tract at residues 881 to 937 is disordered; sequence RGLNYIGPDEGGRASVHSDAEEYGGGTPAAAGTRRERREAARAEGKGKRGPKSRRKH. Composition is skewed to basic and acidic residues over residues 890–900 and 913–927; these read EGGRASVHSDA and TRRE…EGKG. The span at 928–937 shows a compositional bias: basic residues; that stretch reads KRGPKSRRKH.

This sequence belongs to the SecA family. As to quaternary structure, monomer and homodimer. Part of the essential Sec protein translocation apparatus which comprises SecA, SecYEG and auxiliary proteins SecDF. Other proteins may also be involved.

It localises to the cell membrane. The protein resides in the cytoplasm. It catalyses the reaction ATP + H2O + cellular proteinSide 1 = ADP + phosphate + cellular proteinSide 2.. Its function is as follows. Part of the Sec protein translocase complex. Interacts with the SecYEG preprotein conducting channel. Has a central role in coupling the hydrolysis of ATP to the transfer of proteins into and across the cell membrane, serving as an ATP-driven molecular motor driving the stepwise translocation of polypeptide chains across the membrane. The chain is Protein translocase subunit SecA from Nocardia farcinica (strain IFM 10152).